The chain runs to 324 residues: Beta-ketoacyl-[acyl-carrier-protein] synthase III (324 aa).

Catalysis depends on residues C114 and H251. An ACP-binding region spans residues Q252–R256. The active site involves N281.

Belongs to the thiolase-like superfamily. FabH family. Homodimer.

It is found in the cytoplasm. The enzyme catalyses malonyl-[ACP] + acetyl-CoA + H(+) = 3-oxobutanoyl-[ACP] + CO2 + CoA. It participates in lipid metabolism; fatty acid biosynthesis. Functionally, catalyzes the condensation reaction of fatty acid synthesis by the addition to an acyl acceptor of two carbons from malonyl-ACP. Catalyzes the first condensation reaction which initiates fatty acid synthesis and may therefore play a role in governing the total rate of fatty acid production. Possesses both acetoacetyl-ACP synthase and acetyl transacylase activities. Its substrate specificity determines the biosynthesis of branched-chain and/or straight-chain of fatty acids. This Paramagnetospirillum magneticum (strain ATCC 700264 / AMB-1) (Magnetospirillum magneticum) protein is Beta-ketoacyl-[acyl-carrier-protein] synthase III.